The sequence spans 458 residues: ATP synthase subunit beta (458 aa).

148–155 (GGAGVGKT) is a binding site for ATP.

The protein belongs to the ATPase alpha/beta chains family. F-type ATPases have 2 components, CF(1) - the catalytic core - and CF(0) - the membrane proton channel. CF(1) has five subunits: alpha(3), beta(3), gamma(1), delta(1), epsilon(1). CF(0) has three main subunits: a(1), b(2) and c(9-12). The alpha and beta chains form an alternating ring which encloses part of the gamma chain. CF(1) is attached to CF(0) by a central stalk formed by the gamma and epsilon chains, while a peripheral stalk is formed by the delta and b chains.

Its subcellular location is the cell inner membrane. The enzyme catalyses ATP + H2O + 4 H(+)(in) = ADP + phosphate + 5 H(+)(out). Its function is as follows. Produces ATP from ADP in the presence of a proton gradient across the membrane. The catalytic sites are hosted primarily by the beta subunits. This is ATP synthase subunit beta from Mannheimia succiniciproducens (strain KCTC 0769BP / MBEL55E).